Consider the following 51-residue polypeptide: MKYGVRYPISGVHECPFGYKQAQMIQFLATRYGVYEAELVTSHDGLQWEAI.

The polypeptide is Gene 62 protein (62) (Mycobacterium (Mycobacteriophage L5)).